The following is a 615-amino-acid chain: 1-deoxy-D-xylulose-5-phosphate synthase (615 aa).

Residues H72 and 111–113 contribute to the thiamine diphosphate site; that span reads GHS. D142 contributes to the Mg(2+) binding site. Residues 143–144, N171, Y278, and E360 contribute to the thiamine diphosphate site; that span reads GA. N171 is a binding site for Mg(2+).

Belongs to the transketolase family. DXPS subfamily. In terms of assembly, homodimer. It depends on Mg(2+) as a cofactor. Thiamine diphosphate is required as a cofactor.

It carries out the reaction D-glyceraldehyde 3-phosphate + pyruvate + H(+) = 1-deoxy-D-xylulose 5-phosphate + CO2. It functions in the pathway metabolic intermediate biosynthesis; 1-deoxy-D-xylulose 5-phosphate biosynthesis; 1-deoxy-D-xylulose 5-phosphate from D-glyceraldehyde 3-phosphate and pyruvate: step 1/1. In terms of biological role, catalyzes the acyloin condensation reaction between C atoms 2 and 3 of pyruvate and glyceraldehyde 3-phosphate to yield 1-deoxy-D-xylulose-5-phosphate (DXP). The polypeptide is 1-deoxy-D-xylulose-5-phosphate synthase (Campylobacter jejuni subsp. jejuni serotype O:2 (strain ATCC 700819 / NCTC 11168)).